Consider the following 84-residue polypeptide: ATP synthase subunit c (84 aa).

The next 2 membrane-spanning stretches (helical) occupy residues Ala21–Ile38 and Met60–Leu80.

The protein belongs to the ATPase C chain family. In terms of assembly, F-type ATPases have 2 components, F(1) - the catalytic core - and F(0) - the membrane proton channel. F(1) has five subunits: alpha(3), beta(3), gamma(1), delta(1), epsilon(1). F(0) has three main subunits: a(1), b(2) and c(10-14). The alpha and beta chains form an alternating ring which encloses part of the gamma chain. F(1) is attached to F(0) by a central stalk formed by the gamma and epsilon chains, while a peripheral stalk is formed by the delta and b chains.

The protein localises to the cell inner membrane. Its function is as follows. F(1)F(0) ATP synthase produces ATP from ADP in the presence of a proton or sodium gradient. F-type ATPases consist of two structural domains, F(1) containing the extramembraneous catalytic core and F(0) containing the membrane proton channel, linked together by a central stalk and a peripheral stalk. During catalysis, ATP synthesis in the catalytic domain of F(1) is coupled via a rotary mechanism of the central stalk subunits to proton translocation. In terms of biological role, key component of the F(0) channel; it plays a direct role in translocation across the membrane. A homomeric c-ring of between 10-14 subunits forms the central stalk rotor element with the F(1) delta and epsilon subunits. This Phocaeicola vulgatus (strain ATCC 8482 / DSM 1447 / JCM 5826 / CCUG 4940 / NBRC 14291 / NCTC 11154) (Bacteroides vulgatus) protein is ATP synthase subunit c.